We begin with the raw amino-acid sequence, 206 residues long: Ribosomal RNA large subunit methyltransferase E (206 aa).

S-adenosyl-L-methionine contacts are provided by G60, W62, D80, D96, and D121. K161 serves as the catalytic Proton acceptor.

This sequence belongs to the class I-like SAM-binding methyltransferase superfamily. RNA methyltransferase RlmE family.

It localises to the cytoplasm. The enzyme catalyses uridine(2552) in 23S rRNA + S-adenosyl-L-methionine = 2'-O-methyluridine(2552) in 23S rRNA + S-adenosyl-L-homocysteine + H(+). Functionally, specifically methylates the uridine in position 2552 of 23S rRNA at the 2'-O position of the ribose in the fully assembled 50S ribosomal subunit. In Francisella tularensis subsp. novicida (strain U112), this protein is Ribosomal RNA large subunit methyltransferase E.